We begin with the raw amino-acid sequence, 465 residues long: MKGVISQVMGPVVDVDFNDYLPKINEAIEVFFEVEGKKHKLILEVAAHLGDNRVRTIAMDMSEGLTRGLEAKALGAPISVPVGEKVLGRIFNVVGDLIDEGEGINFDKHWSIHRDPPPFEEQSTKSEIFETGIKVVDLLAPYAKGGKVGLFGGAGVGKTVIIMELIHNVAFKHSGYSVFAGVGERTREGNDLYHEMKESNVLDKVALCYGQMNEPPGARNRIALTGLTMAEYFRDEMGLDVLMFIDNIFRFSQSGAEMSALLGRIPSAVGYQPTLASEMGKFQERITSTKKGSITSVQAVYVPADDLTDPAPATVFAHLDATTVLNRSIAEKGIYPAVDPLDSTSRMLDPQILGADHYKVARGVQAVLQKYKDLQDIIAILGMDELSEEDKLTVDRARKIERFLSQPFFVAEVFTGSPGKYVSLDENIAGFKGILEGKYDHLPEAAFYMVGNIDEALAKAEKLKA.

Residue 152-159 (GGAGVGKT) coordinates ATP.

This sequence belongs to the ATPase alpha/beta chains family. As to quaternary structure, F-type ATPases have 2 components, CF(1) - the catalytic core - and CF(0) - the membrane proton channel. CF(1) has five subunits: alpha(3), beta(3), gamma(1), delta(1), epsilon(1). CF(0) has three main subunits: a(1), b(2) and c(9-12). The alpha and beta chains form an alternating ring which encloses part of the gamma chain. CF(1) is attached to CF(0) by a central stalk formed by the gamma and epsilon chains, while a peripheral stalk is formed by the delta and b chains.

The protein resides in the cell inner membrane. The enzyme catalyses ATP + H2O + 4 H(+)(in) = ADP + phosphate + 5 H(+)(out). Produces ATP from ADP in the presence of a proton gradient across the membrane. The catalytic sites are hosted primarily by the beta subunits. The protein is ATP synthase subunit beta of Campylobacter concisus (strain 13826).